The sequence spans 38 residues: GLSQSGCQAFTGRWCVGCERLRSRVVWECSPKRVVNSI.

In terms of processing, contains 2 disulfide bonds. As to expression, expressed by the venom duct.

It localises to the secreted. The sequence is that of Augerpeptide hhe53 from Hastula hectica (Sea snail).